The sequence spans 281 residues: Pre T-cell antigen receptor alpha (281 aa).

An N-terminal signal peptide occupies residues 1-23 (MAGTWLLLLLALGCPALPTGVGG). Residues 24-146 (TPFPSLAPPI…QEPLRGTPGG (123 aa)) lie on the Extracellular side of the membrane. An intrachain disulfide couples Cys47 to Cys107. The N-linked (GlcNAc...) asparagine glycan is linked to Asn67. The helical transmembrane segment at 147–167 (ALWLGVLRLLLFKLLLFDLLL) threads the bilayer. Over 168-281 (TCSCLCDPAG…LPPPLQAGAA (114 aa)) the chain is Cytoplasmic. The tract at residues 196–233 (LHPATETGGREATSSPRPQPRDRRWGDTPPGRKPGSPV) is disordered.

Heterodimer with TCRB; disulfide linked. This heterodimer assembles with CD3 proteins into a signaling-competent pre-T-cell receptor complex. Interacts with RHBDD1. As to expression, expressed in immature but not mature T-cells. Also found in CD34+ cells from peripheral blood, CD34+ precursors from umbilical cord blood and adult bone marrow.

Its subcellular location is the membrane. The protein localises to the cell membrane. Functionally, component of the pre-T-cell receptor complex (composed of PTCRA, TCRB and the CD3 complex) that has a crucial role in early T-cell development, particularly alpha-beta T cell differentiation. The sequence is that of Pre T-cell antigen receptor alpha from Homo sapiens (Human).